Reading from the N-terminus, the 356-residue chain is Dihydroorotate dehydrogenase (quinone) (356 aa).

FMN is bound by residues 66-70 and T90; that span reads AGFDK. K70 is a binding site for substrate. Residue 115–119 coordinates substrate; that stretch reads NRMGF. FMN-binding residues include N143 and N176. N176 serves as a coordination point for substrate. Catalysis depends on S179, which acts as the Nucleophile. A substrate-binding site is contributed by N181. Residues K212 and T240 each contribute to the FMN site. 241 to 242 provides a ligand contact to substrate; the sequence is NT. Residues G266, G295, and 316 to 317 each bind FMN; that span reads YT.

This sequence belongs to the dihydroorotate dehydrogenase family. Type 2 subfamily. In terms of assembly, monomer. The cofactor is FMN.

The protein resides in the cell membrane. It carries out the reaction (S)-dihydroorotate + a quinone = orotate + a quinol. Its pathway is pyrimidine metabolism; UMP biosynthesis via de novo pathway; orotate from (S)-dihydroorotate (quinone route): step 1/1. Catalyzes the conversion of dihydroorotate to orotate with quinone as electron acceptor. The sequence is that of Dihydroorotate dehydrogenase (quinone) from Rhodococcus erythropolis (strain PR4 / NBRC 100887).